The following is a 235-amino-acid chain: Uridylate kinase (235 aa).

Position 9–12 (9–12 (KLSG)) interacts with ATP. The tract at residues 17–22 (GDQGYG) is involved in allosteric activation by GTP. Gly-51 contacts UMP. Positions 52 and 56 each coordinate ATP. UMP is bound by residues Asp-71 and 132-139 (CGNPFFTT). ATP is bound by residues Thr-159, Tyr-165, and Asp-168.

The protein belongs to the UMP kinase family. As to quaternary structure, homohexamer.

Its subcellular location is the cytoplasm. It carries out the reaction UMP + ATP = UDP + ADP. Its pathway is pyrimidine metabolism; CTP biosynthesis via de novo pathway; UDP from UMP (UMPK route): step 1/1. Allosterically activated by GTP. Inhibited by UTP. Catalyzes the reversible phosphorylation of UMP to UDP. The polypeptide is Uridylate kinase (Synechococcus sp. (strain WH7803)).